The chain runs to 344 residues: Lipase chaperone (344 aa).

A helical transmembrane segment spans residues 14-34 (VAVYGAVGLAAIAGVAIWSGA). The span at 45 to 57 (LSADAAARDGASA) shows a compositional bias: low complexity. Residues 45–78 (LSADAAARDGASAAPPPPARPASAGMPSPLAGSS) form a disordered region.

The protein belongs to the lipase chaperone family.

Its subcellular location is the cell inner membrane. In terms of biological role, may be involved in the folding of the extracellular lipase during its passage through the periplasm. The protein is Lipase chaperone of Burkholderia ambifaria (strain ATCC BAA-244 / DSM 16087 / CCUG 44356 / LMG 19182 / AMMD) (Burkholderia cepacia (strain AMMD)).